Consider the following 326-residue polypeptide: Biotin synthase (326 aa).

Positions 42–266 (NEIQLAALLN…LMPKSYVRLA (225 aa)) constitute a Radical SAM core domain. [4Fe-4S] cluster-binding residues include C57, C61, and C64. Residues C101, C132, C192, and R264 each coordinate [2Fe-2S] cluster.

This sequence belongs to the radical SAM superfamily. Biotin synthase family. As to quaternary structure, homodimer. Requires [4Fe-4S] cluster as cofactor. It depends on [2Fe-2S] cluster as a cofactor.

The catalysed reaction is (4R,5S)-dethiobiotin + (sulfur carrier)-SH + 2 reduced [2Fe-2S]-[ferredoxin] + 2 S-adenosyl-L-methionine = (sulfur carrier)-H + biotin + 2 5'-deoxyadenosine + 2 L-methionine + 2 oxidized [2Fe-2S]-[ferredoxin]. It participates in cofactor biosynthesis; biotin biosynthesis; biotin from 7,8-diaminononanoate: step 2/2. Functionally, catalyzes the conversion of dethiobiotin (DTB) to biotin by the insertion of a sulfur atom into dethiobiotin via a radical-based mechanism. The chain is Biotin synthase from Ehrlichia chaffeensis (strain ATCC CRL-10679 / Arkansas).